The chain runs to 483 residues: MSLEDSLRSLSLDYLNLLINGQAFSDVVFSVEGRLVHAHRCILAARSLFFRKFFCGPDPPSGLDPSGNRVNSSTRSGVIPVNSVGYEVFLLMLQFLYSGQVSIVPQKHEPRPNCGDRGCWHTHCTSAVDLALDTLSAARYFGVEQLALLTQKQLASMVEKASIEDVMKVLLASRKQDMHQLWTTCSHLVAKSGLPPEVLAKHLPIDIIAKIEELRMKSSLSRRSLIPHHHHNPHHHHDHLTAAADLEDQKIRRMRRALDSSDVELVKLMVMGEGLNLDEALALPYAVESCSREVVKALLELGAADVNFPAGPTGKTPLHIAAEMVSPDMVAVLLDHHADPNVRTVDGVTPLDILRTLTSDFLFKGAVPGLTHIEPNKLRLCLELVQSAALVMSREEGNNNNNANNNNTGSSATNMYPHNHMNEEHHSHHNNNSNMDSRLVYLNLGANTQMSTSRLDSGDDDHNSNQREAMNPSMYHHHHSHDY.

Positions 25-105 constitute a BTB domain; the sequence is SDVVFSVEGR…LYSGQVSIVP (81 aa). The C2HC NPR-type zinc-finger motif lies at 111-125; sequence RPNCGDRGCWHTHCT. Positions 114, 119, 121, and 124 each coordinate Zn(2+). 4 ANK repeats span residues 249 to 278, 279 to 308, 313 to 342, and 346 to 380; these read QKIR…LNLD, EALA…DVNF, TGKT…DPNV, and DGVT…KLRL. Disordered stretches follow at residues 395-435 and 450-483; these read EEGN…NSNM and MSTS…SHDY. The span at 398–414 shows a compositional bias: low complexity; sequence NNNNNANNNNTGSSATN. Basic and acidic residues predominate over residues 456-465; sequence DSGDDDHNSN.

This sequence belongs to the plant 'ANKYRIN-BTB/POZ' family. 'NOOT-BOP-COCH-like' (NBCL) subfamily. Homodimer.

It localises to the nucleus. Its subcellular location is the cytoplasm. The protein resides in the cell membrane. The protein operates within protein modification; protein ubiquitination. Its function is as follows. May act as a substrate-specific adapter of an E3 ubiquitin-protein ligase complex (CUL3-RBX1-BTB) which mediates the ubiquitination and subsequent proteasomal degradation of target proteins. Transcriptional co-regulator involved in the promotion of leaf and floral meristem fate and determinacy. Promotes normal stipule growth and development. Required for the abscission of senescent organs, probably by regulating the cell wall disorganization in abscission zones (AZs, e.g. pulvini at the base of leaves). Down-regulates UNI expression in primordia of leaves and secondary inflorescences, and thereby controls their sizes and/or structures. Involved in the coordination of the symbiotic nodule developmental program. Promotes the formation of root nodules by interacting directly with APP1 to modulate the expression of the nuclear transcription factor Y subunit (NF-YA1), a key nodulin. Necessary for the robust maintenance of nodule identity throughout the nodule developmental program. The sequence is that of BTB/POZ domain and ankyrin repeat-containing protein COCH from Pisum sativum (Garden pea).